The primary structure comprises 1358 residues: DNA-directed RNA polymerase subunit beta (1358 aa).

Belongs to the RNA polymerase beta chain family. As to quaternary structure, the RNAP catalytic core consists of 2 alpha, 1 beta, 1 beta' and 1 omega subunit. When a sigma factor is associated with the core the holoenzyme is formed, which can initiate transcription.

The enzyme catalyses RNA(n) + a ribonucleoside 5'-triphosphate = RNA(n+1) + diphosphate. Its function is as follows. DNA-dependent RNA polymerase catalyzes the transcription of DNA into RNA using the four ribonucleoside triphosphates as substrates. The sequence is that of DNA-directed RNA polymerase subunit beta from Chromohalobacter salexigens (strain ATCC BAA-138 / DSM 3043 / CIP 106854 / NCIMB 13768 / 1H11).